We begin with the raw amino-acid sequence, 204 residues long: FMN-dependent NADH:quinone oxidoreductase (204 aa).

Serine 9 is an FMN binding site.

This sequence belongs to the azoreductase type 1 family. In terms of assembly, homodimer. FMN is required as a cofactor.

It catalyses the reaction 2 a quinone + NADH + H(+) = 2 a 1,4-benzosemiquinone + NAD(+). It carries out the reaction N,N-dimethyl-1,4-phenylenediamine + anthranilate + 2 NAD(+) = 2-(4-dimethylaminophenyl)diazenylbenzoate + 2 NADH + 2 H(+). Functionally, quinone reductase that provides resistance to thiol-specific stress caused by electrophilic quinones. Its function is as follows. Also exhibits azoreductase activity. Catalyzes the reductive cleavage of the azo bond in aromatic azo compounds to the corresponding amines. The chain is FMN-dependent NADH:quinone oxidoreductase from Thiobacillus denitrificans (strain ATCC 25259 / T1).